The following is a 201-amino-acid chain: Small ribosomal subunit protein uS4c (201 aa).

Residues 15–44 are disordered; it reads LGALPGLTNKRPRAGSDLRNQSRSGKKSQY. The 61-residue stretch at 89 to 149 folds into the S4 RNA-binding domain; sequence MRLDNILFRL…DEQNSRALIQ (61 aa).

Belongs to the universal ribosomal protein uS4 family. In terms of assembly, part of the 30S ribosomal subunit. Contacts protein S5. The interaction surface between S4 and S5 is involved in control of translational fidelity.

The protein resides in the plastid. It is found in the chloroplast. Its function is as follows. One of the primary rRNA binding proteins, it binds directly to 16S rRNA where it nucleates assembly of the body of the 30S subunit. Functionally, with S5 and S12 plays an important role in translational accuracy. This is Small ribosomal subunit protein uS4c (rps4) from Daucus carota (Wild carrot).